The sequence spans 472 residues: Aspartyl/glutamyl-tRNA(Asn/Gln) amidotransferase subunit B (472 aa).

It belongs to the GatB/GatE family. GatB subfamily. Heterotrimer of A, B and C subunits.

The enzyme catalyses L-glutamyl-tRNA(Gln) + L-glutamine + ATP + H2O = L-glutaminyl-tRNA(Gln) + L-glutamate + ADP + phosphate + H(+). The catalysed reaction is L-aspartyl-tRNA(Asn) + L-glutamine + ATP + H2O = L-asparaginyl-tRNA(Asn) + L-glutamate + ADP + phosphate + 2 H(+). In terms of biological role, allows the formation of correctly charged Asn-tRNA(Asn) or Gln-tRNA(Gln) through the transamidation of misacylated Asp-tRNA(Asn) or Glu-tRNA(Gln) in organisms which lack either or both of asparaginyl-tRNA or glutaminyl-tRNA synthetases. The reaction takes place in the presence of glutamine and ATP through an activated phospho-Asp-tRNA(Asn) or phospho-Glu-tRNA(Gln). The chain is Aspartyl/glutamyl-tRNA(Asn/Gln) amidotransferase subunit B from Campylobacter jejuni subsp. jejuni serotype O:23/36 (strain 81-176).